Here is a 164-residue protein sequence, read N- to C-terminus: SsrA-binding protein (164 aa).

The protein belongs to the SmpB family.

Its subcellular location is the cytoplasm. In terms of biological role, required for rescue of stalled ribosomes mediated by trans-translation. Binds to transfer-messenger RNA (tmRNA), required for stable association of tmRNA with ribosomes. tmRNA and SmpB together mimic tRNA shape, replacing the anticodon stem-loop with SmpB. tmRNA is encoded by the ssrA gene; the 2 termini fold to resemble tRNA(Ala) and it encodes a 'tag peptide', a short internal open reading frame. During trans-translation Ala-aminoacylated tmRNA acts like a tRNA, entering the A-site of stalled ribosomes, displacing the stalled mRNA. The ribosome then switches to translate the ORF on the tmRNA; the nascent peptide is terminated with the 'tag peptide' encoded by the tmRNA and targeted for degradation. The ribosome is freed to recommence translation, which seems to be the essential function of trans-translation. This chain is SsrA-binding protein, found in Gluconobacter oxydans (strain 621H) (Gluconobacter suboxydans).